The chain runs to 805 residues: Serine/threonine-protein kinase fused (805 aa).

Residues 4–254 enclose the Protein kinase domain; it reads YAVSSLVGQG…WTQLLCHPFV (251 aa). Residues 10-18 and lysine 33 each bind ATP; that span reads VGQGSFGCV. Catalysis depends on aspartate 125, which acts as the Proton acceptor. Residues 269-289 form a disordered region; it reads KESPFTNPEAKVKSSKQSDPE. Basic and acidic residues predominate over residues 278 to 287; sequence AKVKSSKQSD. Serine 422 and serine 429 each carry phosphoserine. Over residues 447 to 456 the composition is skewed to basic and acidic residues; it reads IATQEKHNQE. Residues 447–496 are disordered; it reads IATQEKHNQENKPPAEAISYANSQPPQQQPQQLKHSMHSTNEEKLSSDNT.

Belongs to the protein kinase superfamily. Ser/Thr protein kinase family. Expressed in all imaginal disks, higher level in wing disk.

The catalysed reaction is L-seryl-[protein] + ATP = O-phospho-L-seryl-[protein] + ADP + H(+). It carries out the reaction L-threonyl-[protein] + ATP = O-phospho-L-threonyl-[protein] + ADP + H(+). Its function is as follows. Probable serine/threonine-protein kinase; maternally required for correct patterning in the posterior part of each embryonic metamere. May be involved in control of cell division during metamorphosis and ovarian development. May interact with costal-2. The sequence is that of Serine/threonine-protein kinase fused (fu) from Drosophila melanogaster (Fruit fly).